Consider the following 292-residue polypeptide: 4-diphosphocytidyl-2-C-methyl-D-erythritol kinase (292 aa).

Lys-11 is a catalytic residue. ATP is bound at residue 95 to 105 (PVSAGLAGGSS). Asp-137 is a catalytic residue.

Belongs to the GHMP kinase family. IspE subfamily.

It carries out the reaction 4-CDP-2-C-methyl-D-erythritol + ATP = 4-CDP-2-C-methyl-D-erythritol 2-phosphate + ADP + H(+). It participates in isoprenoid biosynthesis; isopentenyl diphosphate biosynthesis via DXP pathway; isopentenyl diphosphate from 1-deoxy-D-xylulose 5-phosphate: step 3/6. Its function is as follows. Catalyzes the phosphorylation of the position 2 hydroxy group of 4-diphosphocytidyl-2C-methyl-D-erythritol. This Alkaliphilus oremlandii (strain OhILAs) (Clostridium oremlandii (strain OhILAs)) protein is 4-diphosphocytidyl-2-C-methyl-D-erythritol kinase.